The following is a 284-amino-acid chain: 2-dehydro-3-deoxyphosphooctonate aldolase (284 aa).

The protein belongs to the KdsA family.

The protein resides in the cytoplasm. It catalyses the reaction D-arabinose 5-phosphate + phosphoenolpyruvate + H2O = 3-deoxy-alpha-D-manno-2-octulosonate-8-phosphate + phosphate. Its pathway is carbohydrate biosynthesis; 3-deoxy-D-manno-octulosonate biosynthesis; 3-deoxy-D-manno-octulosonate from D-ribulose 5-phosphate: step 2/3. It participates in bacterial outer membrane biogenesis; lipopolysaccharide biosynthesis. This chain is 2-dehydro-3-deoxyphosphooctonate aldolase, found in Pseudoalteromonas translucida (strain TAC 125).